We begin with the raw amino-acid sequence, 213 residues long: Orotate phosphoribosyltransferase (213 aa).

A 5-phospho-alpha-D-ribose 1-diphosphate-binding site is contributed by Lys26. 34-35 lines the orotate pocket; it reads FF. 5-phospho-alpha-D-ribose 1-diphosphate contacts are provided by residues 72-73, Arg99, Lys100, Lys103, His105, and 124-132; these read YK and DDVITAGTA. 2 residues coordinate orotate: Thr128 and Arg156.

The protein belongs to the purine/pyrimidine phosphoribosyltransferase family. PyrE subfamily. Homodimer. The cofactor is Mg(2+).

It catalyses the reaction orotidine 5'-phosphate + diphosphate = orotate + 5-phospho-alpha-D-ribose 1-diphosphate. Its pathway is pyrimidine metabolism; UMP biosynthesis via de novo pathway; UMP from orotate: step 1/2. Catalyzes the transfer of a ribosyl phosphate group from 5-phosphoribose 1-diphosphate to orotate, leading to the formation of orotidine monophosphate (OMP). The chain is Orotate phosphoribosyltransferase from Klebsiella pneumoniae subsp. pneumoniae (strain ATCC 700721 / MGH 78578).